A 258-amino-acid polypeptide reads, in one-letter code: MQIIRNNSQDPISISNWRWACFLDETIKAFSTFQTRPYQIDNDFLFRESFFGSSSNPKKVILETWGLKMEKIRQARCACLQAGEITSVMNLVISPLNNYDLPFFGADFVTLPNGHLIALDLQPALKDDINHTQHVWNKLKPIHAHWQSKIPTGGDIPSDARQYFSPAFLWSRIPLGEEGDNLITQTIKPAFDEYLNCFFDLLRDAKITSKERSFQLLNGQKKYMRYRAEKDPARGMLRSFFGEVWTESYINNILFDLK.

Belongs to the HY2 family.

It carries out the reaction (3Z)-phycoerythrobilin + oxidized 2[4Fe-4S]-[ferredoxin] = 15,16-dihydrobiliverdin + reduced 2[4Fe-4S]-[ferredoxin] + 2 H(+). In terms of biological role, catalyzes the two-electron reduction of the C2 and C3(1) diene system of 15,16-dihydrobiliverdin. This Prochlorococcus marinus (strain NATL1A) protein is Phycoerythrobilin:ferredoxin oxidoreductase.